A 1044-amino-acid polypeptide reads, in one-letter code: R3H domain-containing protein 2 (1044 aa).

Disordered stretches follow at residues 23 to 71 and 106 to 147; these read EESV…AKSN and SCPS…QEYT. A compositionally biased stretch (basic and acidic residues) spans 36-56; that stretch reads PSKEDVEKEGEENGLRQETQR. Residue Ser37 is modified to Phosphoserine. Residues 58 to 71 show a composition bias toward basic residues; it reads TSSHGHARKRAKSN. The segment covering 109-143 has biased composition (basic and acidic residues); sequence SDKEEEKSTKDVSEKEDKDKSKEKVPRKMLSRDSS. Ser143 carries the post-translational modification Phosphoserine. The 64-residue stretch at 169-232 folds into the R3H domain; the sequence is RMMLLKLEQE…AVIINKTSST (64 aa). An SUZ domain is found at 233-303; the sequence is RIPEQRFSEH…VRERIFARET (71 aa). Composition is skewed to basic and acidic residues over residues 261–270 and 277–288; these read DASMDRDDNQ and DGRRSKSIEERE. Disordered stretches follow at residues 261–288, 320–408, 433–485, 502–533, 551–600, 729–770, and 807–848; these read DASM…EERE, SSSS…LSRP, CTAQ…FSPS, MAED…LFQP, GQPL…SNQQ, GTSP…SPSG, and GQKP…SLSN. The segment covering 338–349 has biased composition (low complexity); sequence SRTSSSRQSSTD. 3 positions are modified to phosphoserine: Ser362, Ser365, and Ser381. Residues 433-449 show a composition bias toward low complexity; the sequence is CTAQQQQQQQQQQQQLP. 2 stretches are compositionally biased toward polar residues: residues 509 to 521 and 554 to 572; these read PFGQ…QGST and LPTS…QQVL. The segment covering 757 to 770 has biased composition (low complexity); that stretch reads PQMSQQYSGVSPSG. Residues 818 to 848 show a composition bias toward polar residues; sequence GSPQANAQMGSSPVTSPTQSPAPSPVTSLSN. A phosphoserine mark is found at Ser921 and Ser923. 2 positions are modified to phosphothreonine: Thr924 and Thr928.

Its subcellular location is the nucleus. The sequence is that of R3H domain-containing protein 2 (R3hdm2) from Mus musculus (Mouse).